The following is a 286-amino-acid chain: Release factor glutamine methyltransferase (286 aa).

S-adenosyl-L-methionine contacts are provided by residues 120–124 (GTGSG), aspartate 143, tryptophan 172, and asparagine 187. 187–190 (NPPY) provides a ligand contact to substrate.

The protein belongs to the protein N5-glutamine methyltransferase family. PrmC subfamily.

The enzyme catalyses L-glutaminyl-[peptide chain release factor] + S-adenosyl-L-methionine = N(5)-methyl-L-glutaminyl-[peptide chain release factor] + S-adenosyl-L-homocysteine + H(+). In terms of biological role, methylates the class 1 translation termination release factors RF1/PrfA and RF2/PrfB on the glutamine residue of the universally conserved GGQ motif. The polypeptide is Release factor glutamine methyltransferase (Gloeobacter violaceus (strain ATCC 29082 / PCC 7421)).